The chain runs to 430 residues: Glutamate-1-semialdehyde 2,1-aminomutase (430 aa).

Position 268 is an N6-(pyridoxal phosphate)lysine (Lys-268).

It belongs to the class-III pyridoxal-phosphate-dependent aminotransferase family. HemL subfamily. Requires pyridoxal 5'-phosphate as cofactor.

Its subcellular location is the cytoplasm. It carries out the reaction (S)-4-amino-5-oxopentanoate = 5-aminolevulinate. Its pathway is porphyrin-containing compound metabolism; protoporphyrin-IX biosynthesis; 5-aminolevulinate from L-glutamyl-tRNA(Glu): step 2/2. This is Glutamate-1-semialdehyde 2,1-aminomutase from Methanopyrus kandleri (strain AV19 / DSM 6324 / JCM 9639 / NBRC 100938).